Reading from the N-terminus, the 168-residue chain is Protein DESIGUAL 2 (168 aa).

The N-terminal stretch at M1–A20 is a signal peptide. The next 3 helical transmembrane spans lie at L56–L76, A94–V114, and V133–I153.

Belongs to the DESIGUAL family. As to expression, mainly expressed in roots, inflorescences and developing leaves, and, at low levels, in mature leaves.

It is found in the endoplasmic reticulum membrane. Involved, partially redundantly with VCC/DEAL1 and DEAL3, to ensure bilateral symmetry development and early leaf margin patterning, probably via the regulation of auxin and CUC2 distribution. The polypeptide is Protein DESIGUAL 2 (Arabidopsis thaliana (Mouse-ear cress)).